The primary structure comprises 239 residues: tRNA (guanine-N(1)-)-methyltransferase (239 aa).

Residues Gly-108 and 127-132 (LGDFVL) each bind S-adenosyl-L-methionine.

It belongs to the RNA methyltransferase TrmD family. As to quaternary structure, homodimer.

It is found in the cytoplasm. The catalysed reaction is guanosine(37) in tRNA + S-adenosyl-L-methionine = N(1)-methylguanosine(37) in tRNA + S-adenosyl-L-homocysteine + H(+). Functionally, specifically methylates guanosine-37 in various tRNAs. The polypeptide is tRNA (guanine-N(1)-)-methyltransferase (Streptococcus thermophilus (strain CNRZ 1066)).